A 199-amino-acid chain; its full sequence is dTTP/UTP pyrophosphatase (199 aa).

Asp-75 (proton acceptor) is an active-site residue.

It belongs to the Maf family. YhdE subfamily. Requires a divalent metal cation as cofactor.

It localises to the cytoplasm. It carries out the reaction dTTP + H2O = dTMP + diphosphate + H(+). The enzyme catalyses UTP + H2O = UMP + diphosphate + H(+). Functionally, nucleoside triphosphate pyrophosphatase that hydrolyzes dTTP and UTP. May have a dual role in cell division arrest and in preventing the incorporation of modified nucleotides into cellular nucleic acids. This chain is dTTP/UTP pyrophosphatase, found in Methylobacillus flagellatus (strain ATCC 51484 / DSM 6875 / VKM B-1610 / KT).